The chain runs to 86 residues: Small ribosomal subunit protein bS20 (86 aa).

The segment at 1-25 (MANIKSQIKRNKQNEKRHERNKAVK) is disordered. Residues 12 to 22 (KQNEKRHERNK) show a composition bias toward basic and acidic residues.

It belongs to the bacterial ribosomal protein bS20 family.

In terms of biological role, binds directly to 16S ribosomal RNA. The protein is Small ribosomal subunit protein bS20 of Nocardioides sp. (strain ATCC BAA-499 / JS614).